A 204-amino-acid polypeptide reads, in one-letter code: Probable nicotinate-nucleotide adenylyltransferase (204 aa).

It belongs to the NadD family.

The enzyme catalyses nicotinate beta-D-ribonucleotide + ATP + H(+) = deamido-NAD(+) + diphosphate. It functions in the pathway cofactor biosynthesis; NAD(+) biosynthesis; deamido-NAD(+) from nicotinate D-ribonucleotide: step 1/1. In terms of biological role, catalyzes the reversible adenylation of nicotinate mononucleotide (NaMN) to nicotinic acid adenine dinucleotide (NaAD). This is Probable nicotinate-nucleotide adenylyltransferase from Dehalococcoides mccartyi (strain CBDB1).